Consider the following 276-residue polypeptide: Ribosomal RNA small subunit methyltransferase A (276 aa).

Positions 27, 29, 54, 75, 101, and 123 each coordinate S-adenosyl-L-methionine.

It belongs to the class I-like SAM-binding methyltransferase superfamily. rRNA adenine N(6)-methyltransferase family. RsmA subfamily.

It is found in the cytoplasm. The enzyme catalyses adenosine(1518)/adenosine(1519) in 16S rRNA + 4 S-adenosyl-L-methionine = N(6)-dimethyladenosine(1518)/N(6)-dimethyladenosine(1519) in 16S rRNA + 4 S-adenosyl-L-homocysteine + 4 H(+). In terms of biological role, specifically dimethylates two adjacent adenosines (A1518 and A1519) in the loop of a conserved hairpin near the 3'-end of 16S rRNA in the 30S particle. May play a critical role in biogenesis of 30S subunits. The protein is Ribosomal RNA small subunit methyltransferase A of Bartonella tribocorum (strain CIP 105476 / IBS 506).